Consider the following 158-residue polypeptide: Lectin-like protein EP153R (158 aa).

Over 1-26 the chain is Cytoplasmic; that stretch reads MFLNKKYPSLIEKKMDDLMTLKFCYL. Residues 27–47 traverse the membrane as a helical segment; that stretch reads IITFLIITNIFSLAINIWGGG. At 48–158 the chain is on the extracellular side; sequence DMIDRQSCEN…YTETFFICSN (111 aa). C61 and C72 are oxidised to a cystine. Positions 61–157 are lectin-like; it reads CPKDWVGYNN…KYTETFFICS (97 aa). Residues N81, N94, N100, N106, N112, N119, and N139 are each glycosylated (N-linked (GlcNAc...) asparagine; by host).

The protein belongs to the asfivirus lectin-like protein family. In terms of assembly, homodimer.

The protein resides in the host endoplasmic reticulum membrane. In terms of biological role, down-regulates MHC-I expression by impairing the appropriate configuration or presentation into the plasma membrane of the latter. Participates in viral hemadsorption, which may help viral spread. Reduces the transactivating activity of host TP53, thus inhibiting apoptosis. Non-essential for virus growth in swine macrophage cell cultures. In African swine fever virus (isolate Pig/Kenya/KEN-50/1950) (ASFV), this protein is Lectin-like protein EP153R.